We begin with the raw amino-acid sequence, 142 residues long: MAKKIIGYIKLQVPAGKANPSPPIGPALGQRGLNIMEFCKAFNAATQGLEPGMPIPVVITAYGDRTFTYITKTPPMTYFLKKAAGIGKGSTTPGKGSAGTVTMEQVRDIAEKKMPDLNSPTIEAAVQMVVGSARSMGLQVVE.

The protein belongs to the universal ribosomal protein uL11 family. As to quaternary structure, part of the ribosomal stalk of the 50S ribosomal subunit. Interacts with L10 and the large rRNA to form the base of the stalk. L10 forms an elongated spine to which L12 dimers bind in a sequential fashion forming a multimeric L10(L12)X complex. Post-translationally, one or more lysine residues are methylated.

Forms part of the ribosomal stalk which helps the ribosome interact with GTP-bound translation factors. This is Large ribosomal subunit protein uL11 from Rhodospirillum rubrum (strain ATCC 11170 / ATH 1.1.1 / DSM 467 / LMG 4362 / NCIMB 8255 / S1).